Consider the following 458-residue polypeptide: Alpha-2C adrenergic receptor (458 aa).

Residues 1–51 lie on the Extracellular side of the membrane; it reads MASPALAAALAAAAAEGPNGSDAGEWGSGGGANASGTDWVPPPGQYSAGAV. 2 N-linked (GlcNAc...) asparagine glycosylation sites follow: N19 and N33. Residues 52–76 traverse the membrane as a helical segment; sequence AGLAAVVGFLIVFTVVGNVLVVIAV. Over 77–88 the chain is Cytoplasmic; sequence LTSRALRAPQNL. The chain crosses the membrane as a helical span at residues 89 to 114; that stretch reads FLVSLASADILVATLVMPFSLANELM. Topologically, residues 115–124 are extracellular; that stretch reads AYWYFGQVWC. A disulfide bridge links C124 with C202. The chain crosses the membrane as a helical span at residues 125-147; that stretch reads GVYLALDVLFCTSSIVHLCAISL. Residues 148-168 are Cytoplasmic-facing; that stretch reads DRYWSVTQAVEYNLKRTPRRV. A helical transmembrane segment spans residues 169-191; that stretch reads KATIVAVWLISAVISFPPLVSFY. The Extracellular portion of the chain corresponds to 192–207; sequence RRPDGAAYPQCGLNDE. Residues 208–231 form a helical membrane-spanning segment; that stretch reads TWYILSSCIGSFFAPCLIMGLVYA. Residues 232 to 379 lie on the Cytoplasmic side of the membrane; that stretch reads RIYRVAKLRT…QAREKRFTFV (148 aa). The tract at residues 245-343 is disordered; the sequence is SEKRGPAGPD…SPGPGGRLSR (99 aa). Residues 291–303 are compositionally biased toward basic residues; the sequence is RRRRRGALRRGGR. Residues 380 to 403 traverse the membrane as a helical segment; that stretch reads LAVVMGVFVLCWFPFFFSYSLYGI. Topologically, residues 404–416 are extracellular; it reads CREACQLPEPLFK. Residues 417–437 traverse the membrane as a helical segment; sequence FFFWIGYCNSSLNPVIYTVFN. Over 438–458 the chain is Cytoplasmic; the sequence is QDFRRSFKHILFRRRRRGFRQ.

It belongs to the G-protein coupled receptor 1 family. Adrenergic receptor subfamily. ADRA2C sub-subfamily.

It localises to the cell membrane. Alpha-2 adrenergic receptors mediate the catecholamine-induced inhibition of adenylate cyclase through the action of G proteins. In Mus musculus (Mouse), this protein is Alpha-2C adrenergic receptor (Adra2c).